Reading from the N-terminus, the 321-residue chain is uncharacterized protein (321 aa).

Belongs to the carbohydrate kinase PfkB family.

This is an uncharacterized protein from Escherichia coli (strain K12).